We begin with the raw amino-acid sequence, 715 residues long: Polyribonucleotide nucleotidyltransferase (715 aa).

Positions 487 and 493 each coordinate Mg(2+). The KH domain occupies 554–613; sequence PRIETFKIATDKIREVIGTGGKVIREIVEKTGAKVNIDDDGTVKVASSDGESIKAAIKWI. Residues 623-691 enclose the S1 motif domain; that stretch reads NAIYDGTVVK…DRGKTRLSMK (69 aa). The interval 696–715 is disordered; the sequence is ETGEDLEAKQKAAEGATAAE.

Belongs to the polyribonucleotide nucleotidyltransferase family. Mg(2+) serves as cofactor.

It is found in the cytoplasm. It carries out the reaction RNA(n+1) + phosphate = RNA(n) + a ribonucleoside 5'-diphosphate. Its function is as follows. Involved in mRNA degradation. Catalyzes the phosphorolysis of single-stranded polyribonucleotides processively in the 3'- to 5'-direction. The protein is Polyribonucleotide nucleotidyltransferase of Rhodopseudomonas palustris (strain BisB18).